Consider the following 208-residue polypeptide: UPF0711 protein C18orf21 homolog (208 aa).

Residues 123-137 (SKHKSTPGSASKHRT) are compositionally biased toward basic residues. Disordered stretches follow at residues 123–180 (SKHK…KSSP) and 189–208 (MLENKQQGKKGGLKDFLSSL). Polar residues predominate over residues 138 to 152 (PQTVNWATPKSVANR). Over residues 153–180 (TPSSTPRSASSNTSSSSSSKSSSVKSSP) the composition is skewed to low complexity.

This sequence belongs to the UPF0711 family.

This Danio rerio (Zebrafish) protein is UPF0711 protein C18orf21 homolog.